The chain runs to 168 residues: DAZ-associated protein 2 (168 aa).

Positions 1–13 (MNSKGQYPTQPTY) are enriched in low complexity. Positions 1–25 (MNSKGQYPTQPTYPVQPPGNPVYPQ) are disordered. The PPAY motif lies at 39–42 (PPAY). A Phosphoserine modification is found at serine 77.

In terms of assembly, interacts with SOX6. Interacts with DAZ1 and DAZL. Interacts with IL17RB. May interact with FAM168B. Interacts with INCA1. Interacts with EIF4G1 and EIF4G2. Interacts (via PPAY motif) with NEDD4 (via WW domains). Interacts with transcription factor TCF4; the interaction results in localization of DAZAP2 to the nucleus. Interacts with transcription factors TCF7 and TCF7L1. Interacts with transcription factor LEF1. Interacts with serine/threonine-protein kinase HIPK2; the interaction results in phosphorylation of DAZAP2 which causes localization of DAZAP2 to the nucleus, reduces interaction of DAZAP2 with HIPK2 and prevents DAZAP2-dependent degradation of HIPK2. Interacts with ubiquitin ligase SIAH1; the interaction is decreased following phosphorylation of DAZAP2 by HIPK2. Interacts with TP53; the interaction is triggered by DNA damage. Ubiquitinated by SMURF2, leading to proteasomal degradation. Ubiquitinated by NEDD4, leading to proteasomal degradation. In terms of processing, following DNA damage, phosphorylated by HIPK2 which promotes DAZAP2 localization to the nucleus, reduces interaction of DAZAP2 with HIPK2 and SIAH1, and prevents DAZAP2-dependent ubiquitination of HIPK2 by E3 ubiquitin-protein ligase SIAH1 and subsequent HIPK2 proteasomal degradation.

It is found in the cytoplasm. The protein resides in the nucleus. It localises to the nucleus speckle. Its subcellular location is the nuclear body. The protein localises to the stress granule. Its function is as follows. In unstressed cells, promotes SIAH1-mediated polyubiquitination and degradation of the serine/threonine-protein kinase HIPK2, probably by acting as a loading factor that potentiates complex formation between HIPK2 and ubiquitin ligase SIAH1. In response to DNA damage, localizes to the nucleus following phosphorylation by HIPK2 and modulates the expression of a subset of TP53/p53 target genes by binding to TP53 at target gene promoters. This limits the expression of a number of cell death-mediating TP53 target genes, reducing DNA damage-induced cell death. Enhances the binding of transcription factor TCF7L2/TCF4, a Wnt signaling pathway effector, to the promoters of target genes. Plays a role in stress granule formation. This chain is DAZ-associated protein 2, found in Macaca fascicularis (Crab-eating macaque).